The sequence spans 394 residues: NAC domain-containing protein 3 (394 aa).

In terms of domain architecture, NAC spans 3 to 147 (TPVGLRFCPT…TYTLCKVMFN (145 aa)). A DNA-binding region spans residues 104–153 (IGEKKILMFYTSKESKSDWVIHEYHGFSHNQMMMTYTLCKVMFNGGMREK). 2 disordered regions span residues 152–173 (EKSS…RRDS) and 264–300 (NSLT…CDSF). Low complexity predominate over residues 155–165 (SSSPSSSGVSG). Polar residues predominate over residues 286-300 (PKTNSIQTSSTCDSF).

The protein resides in the nucleus. The chain is NAC domain-containing protein 3 (NAC003) from Arabidopsis thaliana (Mouse-ear cress).